The primary structure comprises 352 residues: Histidinol-phosphate aminotransferase (352 aa).

K221 carries the N6-(pyridoxal phosphate)lysine modification.

Belongs to the class-II pyridoxal-phosphate-dependent aminotransferase family. Histidinol-phosphate aminotransferase subfamily. Homodimer. Pyridoxal 5'-phosphate serves as cofactor.

It catalyses the reaction L-histidinol phosphate + 2-oxoglutarate = 3-(imidazol-4-yl)-2-oxopropyl phosphate + L-glutamate. Its pathway is amino-acid biosynthesis; L-histidine biosynthesis; L-histidine from 5-phospho-alpha-D-ribose 1-diphosphate: step 7/9. The sequence is that of Histidinol-phosphate aminotransferase from Staphylococcus aureus (strain MRSA252).